A 137-amino-acid polypeptide reads, in one-letter code: MSAERTLILVKPDGVSRGLVGEVVGRLERKGLTLVALELRTLERSVAETHYGEHASKPFFGELVDFIVSGPLVALVAEGPRAVEASRGLIGATDPVKAAPGSLRGDYALEIGQNLVHGSDSPESAKREIDLFFPGLS.

6 residues coordinate ATP: Lys-11, Phe-59, Arg-87, Thr-93, Arg-104, and Asn-114. His-117 acts as the Pros-phosphohistidine intermediate in catalysis.

Belongs to the NDK family. In terms of assembly, homotetramer. Mg(2+) serves as cofactor.

Its subcellular location is the cytoplasm. It catalyses the reaction a 2'-deoxyribonucleoside 5'-diphosphate + ATP = a 2'-deoxyribonucleoside 5'-triphosphate + ADP. The enzyme catalyses a ribonucleoside 5'-diphosphate + ATP = a ribonucleoside 5'-triphosphate + ADP. In terms of biological role, major role in the synthesis of nucleoside triphosphates other than ATP. The ATP gamma phosphate is transferred to the NDP beta phosphate via a ping-pong mechanism, using a phosphorylated active-site intermediate. This is Nucleoside diphosphate kinase from Frankia alni (strain DSM 45986 / CECT 9034 / ACN14a).